The sequence spans 331 residues: Putative heme-binding peroxidase (331 aa).

His-50 (proton acceptor) is an active-site residue. Residue His-174 participates in heme b binding. Trp-190 acts as the Tryptophan radical intermediate in catalysis. Residues 288–331 form a disordered region; it reads INTDNQKGGYRSAPKKSDSTPATSGQPGASKTGGCPVMHHKAKL. A compositionally biased stretch (polar residues) spans 306–316; that stretch reads STPATSGQPGA.

Belongs to the peroxidase family. Cytochrome c peroxidase subfamily. It depends on heme b as a cofactor.

Functionally, destroys radicals which are normally produced within the cells and which are toxic to biological systems. The polypeptide is Putative heme-binding peroxidase (Gibberella zeae (strain ATCC MYA-4620 / CBS 123657 / FGSC 9075 / NRRL 31084 / PH-1) (Wheat head blight fungus)).